Consider the following 83-residue polypeptide: Mitochondrial import inner membrane translocase subunit Tim8 (83 aa).

The Twin CX3C motif motif lies at 35-60; that stretch reads CWDVCFADYRPPSKMDGKTQTCIQNC. 2 disulfides stabilise this stretch: Cys35-Cys60 and Cys39-Cys56.

Belongs to the small Tim family. Heterohexamer; composed of 3 copies of ddp-1/tim-8 and 3 copies of tin-13/tim-13, named soluble 70 kDa complex. Associates with the TIM22 complex, whose core is composed of tim-22.

The protein localises to the mitochondrion inner membrane. Functionally, mitochondrial intermembrane chaperone that participates in the import and insertion of some multi-pass transmembrane proteins into the mitochondrial inner membrane. Also required for the transfer of beta-barrel precursors from the TOM complex to the sorting and assembly machinery (SAM complex) of the outer membrane. Acts as a chaperone-like protein that protects the hydrophobic precursors from aggregation and guide them through the mitochondrial intermembrane space. The ddp-1/tim-8-tim-13 complex mediates the import of some proteins while the predominant tim-9/tin-9.1-tim-10/tin-10 70 kDa complex mediates the import of much more proteins. The polypeptide is Mitochondrial import inner membrane translocase subunit Tim8 (Caenorhabditis elegans).